The primary structure comprises 37 residues: Large ribosomal subunit protein bL36 (37 aa).

The protein belongs to the bacterial ribosomal protein bL36 family.

The polypeptide is Large ribosomal subunit protein bL36 (Hydrogenobaculum sp. (strain Y04AAS1)).